The primary structure comprises 320 residues: Cytochrome f (320 aa).

Residues 1 to 35 (MQTRKTFSWIKEEITRSISVLLMIYIITWASISNA) form the signal peptide. The heme site is built by Tyr36, Cys56, Cys59, and His60. A helical membrane pass occupies residues 286 to 306 (VQGLLFFLASVILAQIFLVLK).

It belongs to the cytochrome f family. As to quaternary structure, the 4 large subunits of the cytochrome b6-f complex are cytochrome b6, subunit IV (17 kDa polypeptide, petD), cytochrome f and the Rieske protein, while the 4 small subunits are PetG, PetL, PetM and PetN. The complex functions as a dimer. The cofactor is heme.

Its subcellular location is the plastid. It is found in the chloroplast thylakoid membrane. Its function is as follows. Component of the cytochrome b6-f complex, which mediates electron transfer between photosystem II (PSII) and photosystem I (PSI), cyclic electron flow around PSI, and state transitions. The chain is Cytochrome f from Manihot esculenta (Cassava).